Reading from the N-terminus, the 173-residue chain is Archaemetzincin (173 aa).

Histidine 130 provides a ligand contact to Zn(2+). The active-site Proton acceptor is the glutamate 131. Zn(2+) contacts are provided by histidine 134, histidine 140, cysteine 141, cysteine 146, cysteine 165, and cysteine 168.

This sequence belongs to the peptidase M54 family. In terms of assembly, monomer. The cofactor is Zn(2+).

Its function is as follows. Probable zinc metalloprotease whose natural substrate is unknown. This chain is Archaemetzincin, found in Natronomonas pharaonis (strain ATCC 35678 / DSM 2160 / CIP 103997 / JCM 8858 / NBRC 14720 / NCIMB 2260 / Gabara) (Halobacterium pharaonis).